The primary structure comprises 414 residues: Serine hydroxymethyltransferase (414 aa).

Residues L118 and 122–124 contribute to the (6S)-5,6,7,8-tetrahydrofolate site; that span reads GHL. The residue at position 227 (K227) is an N6-(pyridoxal phosphate)lysine. Residues E240 and 350-352 contribute to the (6S)-5,6,7,8-tetrahydrofolate site; that span reads SPF.

The protein belongs to the SHMT family. As to quaternary structure, homodimer. Requires pyridoxal 5'-phosphate as cofactor.

The protein resides in the cytoplasm. It catalyses the reaction (6R)-5,10-methylene-5,6,7,8-tetrahydrofolate + glycine + H2O = (6S)-5,6,7,8-tetrahydrofolate + L-serine. The protein operates within one-carbon metabolism; tetrahydrofolate interconversion. Its pathway is amino-acid biosynthesis; glycine biosynthesis; glycine from L-serine: step 1/1. Its function is as follows. Catalyzes the reversible interconversion of serine and glycine with tetrahydrofolate (THF) serving as the one-carbon carrier. This reaction serves as the major source of one-carbon groups required for the biosynthesis of purines, thymidylate, methionine, and other important biomolecules. Also exhibits THF-independent aldolase activity toward beta-hydroxyamino acids, producing glycine and aldehydes, via a retro-aldol mechanism. This Bacillus cereus (strain ZK / E33L) protein is Serine hydroxymethyltransferase.